A 349-amino-acid chain; its full sequence is Holliday junction branch migration complex subunit RuvB (349 aa).

A compositionally biased stretch (basic and acidic residues) spans 1–15; it reads MSDDYRETDPTRQPE. The disordered stretch occupies residues 1 to 25; that stretch reads MSDDYRETDPTRQPEDMGEGSLRPE. Residues 1–183 form a large ATPase domain (RuvB-L) region; it reads MSDDYRETDP…FGIPLRLVFY (183 aa). Residues Leu-22, Arg-23, Gly-64, Lys-67, Thr-68, Thr-69, 130–132, Arg-173, Tyr-183, and Arg-220 each bind ATP; that span reads EDF. Thr-68 serves as a coordination point for Mg(2+). The small ATPAse domain (RuvB-S) stretch occupies residues 184-254; the sequence is TPEELRAIVS…LADAALGRLE (71 aa). Positions 257–349 are head domain (RuvB-H); that stretch reads ERGLDAMDRR…SSLEQDDSAP (93 aa). Residues Arg-293, Arg-312, and Arg-317 each contribute to the DNA site.

This sequence belongs to the RuvB family. As to quaternary structure, homohexamer. Forms an RuvA(8)-RuvB(12)-Holliday junction (HJ) complex. HJ DNA is sandwiched between 2 RuvA tetramers; dsDNA enters through RuvA and exits via RuvB. An RuvB hexamer assembles on each DNA strand where it exits the tetramer. Each RuvB hexamer is contacted by two RuvA subunits (via domain III) on 2 adjacent RuvB subunits; this complex drives branch migration. In the full resolvosome a probable DNA-RuvA(4)-RuvB(12)-RuvC(2) complex forms which resolves the HJ.

It localises to the cytoplasm. The catalysed reaction is ATP + H2O = ADP + phosphate + H(+). The RuvA-RuvB-RuvC complex processes Holliday junction (HJ) DNA during genetic recombination and DNA repair, while the RuvA-RuvB complex plays an important role in the rescue of blocked DNA replication forks via replication fork reversal (RFR). RuvA specifically binds to HJ cruciform DNA, conferring on it an open structure. The RuvB hexamer acts as an ATP-dependent pump, pulling dsDNA into and through the RuvAB complex. RuvB forms 2 homohexamers on either side of HJ DNA bound by 1 or 2 RuvA tetramers; 4 subunits per hexamer contact DNA at a time. Coordinated motions by a converter formed by DNA-disengaged RuvB subunits stimulates ATP hydrolysis and nucleotide exchange. Immobilization of the converter enables RuvB to convert the ATP-contained energy into a lever motion, pulling 2 nucleotides of DNA out of the RuvA tetramer per ATP hydrolyzed, thus driving DNA branch migration. The RuvB motors rotate together with the DNA substrate, which together with the progressing nucleotide cycle form the mechanistic basis for DNA recombination by continuous HJ branch migration. Branch migration allows RuvC to scan DNA until it finds its consensus sequence, where it cleaves and resolves cruciform DNA. The protein is Holliday junction branch migration complex subunit RuvB of Gluconobacter oxydans (strain 621H) (Gluconobacter suboxydans).